Consider the following 377-residue polypeptide: Bradyzoite pseudokinase 1 (377 aa).

Residues 1–26 (MANTSVRRRQLLSSVLLLQWLTTVLG) form the signal peptide. Residues 39-58 (HGQFPSLRRTEGVSQSGSGH) are disordered. The 307-residue stretch at 48 to 354 (TEGVSQSGSG…IEEIMKDPLF (307 aa)) folds into the Protein kinase domain.

The protein belongs to the protein kinase superfamily. STE Ser/Thr protein kinase family. WNG subfamily. In terms of assembly, forms a complex composed of BPK1, MCP4, MAG1, GRA8 and GRA9. Interacts with MCP4. Interacts with MAG1. Interacts with GRA8. Interacts with GRA9.

The protein localises to the secreted. Required for the growth, maintenance, and/or stability, and thus infectivity, of bradyzoite cysts. This is Bradyzoite pseudokinase 1 from Toxoplasma gondii.